The primary structure comprises 553 residues: uncharacterized protein (553 aa).

The SWIB/MDM2 domain occupies 26-109; sequence RFEFVGWGSR…YDLLEKHYKE (84 aa). Positions 150–275 constitute a Plus3 domain; it reads AIVSDNIKLL…KAKKLHKDQT (126 aa). Disordered regions lie at residues 335–357 and 447–482; these read QNPEVSSPEAHKSDNEQRLSESP and PVNNVDNGSQVQPNPSEVIELSDDDEDDNGDGETLD. Basic and acidic residues predominate over residues 343-353; it reads EAHKSDNEQRL. Residues 447–461 show a composition bias toward polar residues; that stretch reads PVNNVDNGSQVQPNP. Acidic residues predominate over residues 466 to 480; that stretch reads ELSDDDEDDNGDGET. In terms of domain architecture, GYF spans 497–551; the sequence is KLNWLYKDPQGLVQGPFSLTQLKAWSDAEYFTKQFRVWMTGESMESAVLLTDVLR.

This is an uncharacterized protein from Arabidopsis thaliana (Mouse-ear cress).